We begin with the raw amino-acid sequence, 74 residues long: Large ribosomal subunit protein bL28 (74 aa).

This sequence belongs to the bacterial ribosomal protein bL28 family.

The polypeptide is Large ribosomal subunit protein bL28 (Desulforapulum autotrophicum (strain ATCC 43914 / DSM 3382 / VKM B-1955 / HRM2) (Desulfobacterium autotrophicum)).